Consider the following 315-residue polypeptide: Protein-export membrane protein SecF (315 aa).

Helical transmembrane passes span 35–55, 152–172, 181–201, 205–225, 242–264, and 282–302; these read MVLY…VHFP, QGIK…FLFF, IIFS…ILGI, TATI…NILL, LSAV…ILWL, and LLAD…WYIA.

The protein belongs to the SecD/SecF family. SecF subfamily. Part of the protein translocation apparatus. Forms a complex with SecD.

Its subcellular location is the cell membrane. Functionally, involved in protein export. The sequence is that of Protein-export membrane protein SecF from Thermococcus gammatolerans (strain DSM 15229 / JCM 11827 / EJ3).